The sequence spans 579 residues: Glucose starvation modulator protein 1 (579 aa).

Residues 20–48 (CVFCHEKHLQCDLGRPCQNCSKRGIGDTC) constitute a DNA-binding region (zn(2)-C6 fungal-type). Positions 43–53 (GIGDTCRDKER) are enriched in basic and acidic residues. Disordered stretches follow at residues 43–75 (GIGDTCRDKERKPRKRGPRKVKKEREVSASTKS) and 319–342 (QMASESKRHSANDTSPESQGGETV). Over residues 54–64 (KPRKRGPRKVK) the composition is skewed to basic residues. Residues 330–339 (NDTSPESQGG) are compositionally biased toward polar residues. Residues 444–516 (LLEYESMAKL…DIFHEYLAFG (73 aa)) enclose the PAS domain.

Belongs to the ERT1/acuK family.

The protein localises to the nucleus. Functionally, transcription factor which regulates nonfermentable carbon utilization. The sequence is that of Glucose starvation modulator protein 1 (GSM1) from Kluyveromyces lactis (strain ATCC 8585 / CBS 2359 / DSM 70799 / NBRC 1267 / NRRL Y-1140 / WM37) (Yeast).